A 474-amino-acid chain; its full sequence is DNA-binding protein (474 aa).

Residues methionine 1 to lysine 34 form a disordered region. At tyrosine 142 the chain carries Phosphotyrosine; by host. The Zn(2+) site is built by cysteine 231 and histidine 233. The flexible loop stretch occupies residues valine 244–isoleucine 278. Cysteine 286, cysteine 302, cysteine 343, cysteine 345, cysteine 397, and cysteine 413 together coordinate Zn(2+). The segment at valine 460–phenylalanine 474 is C-terminal arm, DBP binding.

It belongs to the adenoviridae E2A DNA-binding protein family. Homomultimerizes on viral ssDNA bound to pTP. Forms a initiation complex with viral polymerase, pTP and hosts NFIA and POU2F1/OCT1. Interacts with host SRCAP.

The protein resides in the host nucleus. In terms of biological role, plays a role in the elongation phase of viral strand displacement replication by unwinding the template in an ATP-independent fashion, employing its capacity to form multimers. Also enhances the rate of initiation. Released from template upon second strand synthesis. Assembles in complex with viral pTP, viral pol, host NFIA and host POU2F1/OCT1 on viral origin of replication. Covers the whole ssDNA genome during synthesis. The complementary strand synthesis induces its relese from DNA template. May inhibit cellular transcription mediated by the interaction between host SRCAP and CBP. This Homo sapiens (Human) protein is DNA-binding protein.